The following is a 263-amino-acid chain: Ribonuclease HII (263 aa).

The RNase H type-2 domain occupies Gln71–Asn262. A divalent metal cation is bound by residues Asp77, Glu78, and Asp172.

It belongs to the RNase HII family. Mn(2+) is required as a cofactor. It depends on Mg(2+) as a cofactor.

The protein localises to the cytoplasm. It carries out the reaction Endonucleolytic cleavage to 5'-phosphomonoester.. Its function is as follows. Endonuclease that specifically degrades the RNA of RNA-DNA hybrids. This Streptococcus pyogenes serotype M3 (strain ATCC BAA-595 / MGAS315) protein is Ribonuclease HII.